A 334-amino-acid polypeptide reads, in one-letter code: Protein-methionine-sulfoxide reductase catalytic subunit MsrP (334 aa).

A signal peptide (tat-type signal) is located at residues 1–44 (MKKNQFLKESDVTAESVFFMKRRQVLKALGISAAALSLPHAAHA). Mo-molybdopterin-binding positions include N88, 91–92 (YE), C146, T181, N233, R238, and 249–251 (GIK).

It belongs to the MsrP family. In terms of assembly, heterodimer of a catalytic subunit (MsrP) and a heme-binding subunit (MsrQ). It depends on Mo-molybdopterin as a cofactor. Predicted to be exported by the Tat system. The position of the signal peptide cleavage has not been experimentally proven.

The protein localises to the periplasm. The catalysed reaction is L-methionyl-[protein] + a quinone + H2O = L-methionyl-(S)-S-oxide-[protein] + a quinol. It catalyses the reaction L-methionyl-[protein] + a quinone + H2O = L-methionyl-(R)-S-oxide-[protein] + a quinol. Part of the MsrPQ system that repairs oxidized periplasmic proteins containing methionine sulfoxide residues (Met-O), using respiratory chain electrons. Thus protects these proteins from oxidative-stress damage caused by reactive species of oxygen and chlorine generated by the host defense mechanisms. MsrPQ is essential for the maintenance of envelope integrity under bleach stress, rescuing a wide series of structurally unrelated periplasmic proteins from methionine oxidation, including the primary periplasmic chaperone SurA and the lipoprotein Pal. The catalytic subunit MsrP is non-stereospecific, being able to reduce both (R-) and (S-) diastereoisomers of methionine sulfoxide. In Shigella boydii serotype 18 (strain CDC 3083-94 / BS512), this protein is Protein-methionine-sulfoxide reductase catalytic subunit MsrP.